The following is a 446-amino-acid chain: 6-methylsalicylate 1-monooxygenase atA (446 aa).

A helical transmembrane segment spans residues Val-7–Gln-27. The FAD site is built by Glu-37 and Ala-50. Asn-107 carries N-linked (GlcNAc...) asparagine glycosylation. Arg-116 contacts FAD. Arg-200 is an active-site residue. FAD-binding residues include Asp-311 and Ala-324.

This sequence belongs to the paxM FAD-dependent monooxygenase family. FAD is required as a cofactor.

The protein resides in the membrane. The catalysed reaction is 6-methylsalicylate + AH2 + O2 + H(+) = 3-methylcatechol + A + CO2 + H2O. Its pathway is secondary metabolite biosynthesis. In terms of biological role, 6-methylsalicylate 1-monooxygenase; part of the gene cluster that mediates the biosynthesis of terreic acid, a quinone epoxide inhibitor of Bruton's tyrosine kinase. The first step of the pathway is the synthesis of 6-methylsalicylic acid (6-MSA) by the 6-methylsalicylic acid synthase atX. In the biosynthesis of 6-MSA, atX utilizes one acetyl-CoA and three malonyl-CoAs as its substrates and catalyzes a series of programmed reactions including Claisen condensation, reduction, aldol cyclization, and the hydrolytic cleavage that yields 6-MSA. The 6-methylsalicylate 1-monooxygenase atA then catalyzes the decarboxylative hydroxylation of 6-MSA to 3-methylcatechol. The next step is the conversion of 3-methylcatechol to 3-methyl-1,2,4-benzenetriol by cytochrome P450 monooxygenase atE, which is enhanced by cytochrome P450 monooxygenase atG. Then, the epoxidase atD catalyzes the epoxidation and hydroxyl oxidation of 3-methyl-1,2,4-benzenetriol to terremutin. Lastly, GMC oxidoreductase atC oxidizes terremutin to terreic acid. The sequence is that of 6-methylsalicylate 1-monooxygenase atA from Aspergillus terreus (strain NIH 2624 / FGSC A1156).